The chain runs to 94 residues: C-X-C motif chemokine 11-1 (94 aa).

A signal peptide spans 1-19 (MKTVTALLLVSLAVVAIEG). 2 disulfides stabilise this stretch: Cys-27–Cys-54 and Cys-29–Cys-71.

This sequence belongs to the intercrine alpha (chemokine CxC) family.

The protein localises to the secreted. Its function is as follows. Ligand for cxcr3.2. Chemotactic for macrophages. The polypeptide is C-X-C motif chemokine 11-1 (cxcl11.1) (Danio rerio (Zebrafish)).